The sequence spans 139 residues: Ribosome-binding factor A (139 aa).

A disordered region spans residues 112–139 (EARTQGQAAPAPDVEPAPGAAPDDEAEE). The span at 119-132 (AAPAPDVEPAPGAA) shows a compositional bias: low complexity.

This sequence belongs to the RbfA family. Monomer. Binds 30S ribosomal subunits, but not 50S ribosomal subunits or 70S ribosomes.

It localises to the cytoplasm. Functionally, one of several proteins that assist in the late maturation steps of the functional core of the 30S ribosomal subunit. Associates with free 30S ribosomal subunits (but not with 30S subunits that are part of 70S ribosomes or polysomes). Required for efficient processing of 16S rRNA. May interact with the 5'-terminal helix region of 16S rRNA. This chain is Ribosome-binding factor A, found in Anaeromyxobacter dehalogenans (strain 2CP-1 / ATCC BAA-258).